The primary structure comprises 547 residues: Glucose-6-phosphate isomerase (547 aa).

Residue Glu356 is the Proton donor of the active site. Active-site residues include His387 and Lys508.

It belongs to the GPI family.

The protein localises to the cytoplasm. It carries out the reaction alpha-D-glucose 6-phosphate = beta-D-fructose 6-phosphate. The protein operates within carbohydrate biosynthesis; gluconeogenesis. Its pathway is carbohydrate degradation; glycolysis; D-glyceraldehyde 3-phosphate and glycerone phosphate from D-glucose: step 2/4. Functionally, catalyzes the reversible isomerization of glucose-6-phosphate to fructose-6-phosphate. The chain is Glucose-6-phosphate isomerase from Cupriavidus taiwanensis (strain DSM 17343 / BCRC 17206 / CCUG 44338 / CIP 107171 / LMG 19424 / R1) (Ralstonia taiwanensis (strain LMG 19424)).